The primary structure comprises 341 residues: Elongation factor G (341 aa).

Belongs to the GTP-binding elongation factor family. EF-G/EF-2 subfamily.

It is found in the cytoplasm. In terms of biological role, catalyzes the GTP-dependent ribosomal translocation step during translation elongation. During this step, the ribosome changes from the pre-translocational (PRE) to the post-translocational (POST) state as the newly formed A-site-bound peptidyl-tRNA and P-site-bound deacylated tRNA move to the P and E sites, respectively. Catalyzes the coordinated movement of the two tRNA molecules, the mRNA and conformational changes in the ribosome. This chain is Elongation factor G (fus), found in Streptomyces ramocissimus.